We begin with the raw amino-acid sequence, 202 residues long: Peptide deformylase 2 (202 aa).

Fe cation contacts are provided by Cys123 and His165. The active site involves Glu166. Residue His169 coordinates Fe cation.

The protein belongs to the polypeptide deformylase family. The cofactor is Fe(2+).

It carries out the reaction N-terminal N-formyl-L-methionyl-[peptide] + H2O = N-terminal L-methionyl-[peptide] + formate. In terms of biological role, removes the formyl group from the N-terminal Met of newly synthesized proteins. Requires at least a dipeptide for an efficient rate of reaction. N-terminal L-methionine is a prerequisite for activity but the enzyme has broad specificity at other positions. This Vibrio vulnificus (strain YJ016) protein is Peptide deformylase 2.